A 318-amino-acid chain; its full sequence is Dimethyladenosine transferase (318 aa).

S-adenosyl-L-methionine is bound by residues His-37, Leu-39, Gly-64, Glu-85, Asp-113, and Asn-128.

It belongs to the class I-like SAM-binding methyltransferase superfamily. rRNA adenine N(6)-methyltransferase family.

Its subcellular location is the cytoplasm. The protein localises to the nucleus. It is found in the nucleolus. The enzyme catalyses adenosine(1779)/adenosine(1780) in 18S rRNA + 4 S-adenosyl-L-methionine = N(6)-dimethyladenosine(1779)/N(6)-dimethyladenosine(1780) in 18S rRNA + 4 S-adenosyl-L-homocysteine + 4 H(+). Specifically dimethylates two adjacent adenosines in the loop of a conserved hairpin near the 3'-end of 18S rRNA in the 40S particle. The polypeptide is Dimethyladenosine transferase (Saccharomyces cerevisiae (strain ATCC 204508 / S288c) (Baker's yeast)).